The following is a 189-amino-acid chain: Large ribosomal subunit protein uL6 (189 aa).

It belongs to the universal ribosomal protein uL6 family. Part of the 50S ribosomal subunit.

Its function is as follows. This protein binds to the 23S rRNA, and is important in its secondary structure. It is located near the subunit interface in the base of the L7/L12 stalk, and near the tRNA binding site of the peptidyltransferase center. The sequence is that of Large ribosomal subunit protein uL6 from Phocaeicola vulgatus (strain ATCC 8482 / DSM 1447 / JCM 5826 / CCUG 4940 / NBRC 14291 / NCTC 11154) (Bacteroides vulgatus).